We begin with the raw amino-acid sequence, 93 residues long: UPF0358 protein BBR47_22520 (93 aa).

Belongs to the UPF0358 family.

The sequence is that of UPF0358 protein BBR47_22520 from Brevibacillus brevis (strain 47 / JCM 6285 / NBRC 100599).